We begin with the raw amino-acid sequence, 400 residues long: Phosphoglycerate kinase (400 aa).

Substrate-binding positions include 22 to 24 (DFN), R38, 61 to 64 (HLGR), R120, and R153. Residues K206, G297, E328, and 354-357 (GGDT) contribute to the ATP site.

It belongs to the phosphoglycerate kinase family. Monomer.

Its subcellular location is the cytoplasm. It catalyses the reaction (2R)-3-phosphoglycerate + ATP = (2R)-3-phospho-glyceroyl phosphate + ADP. The protein operates within carbohydrate degradation; glycolysis; pyruvate from D-glyceraldehyde 3-phosphate: step 2/5. This is Phosphoglycerate kinase from Campylobacter curvus (strain 525.92).